The primary structure comprises 444 residues: Tubulin beta-9 chain (444 aa).

GTP contacts are provided by Q11, E69, S138, G142, T143, G144, N204, and N226. E69 provides a ligand contact to Mg(2+).

Belongs to the tubulin family. In terms of assembly, dimer of alpha and beta chains. A typical microtubule is a hollow water-filled tube with an outer diameter of 25 nm and an inner diameter of 15 nM. Alpha-beta heterodimers associate head-to-tail to form protofilaments running lengthwise along the microtubule wall with the beta-tubulin subunit facing the microtubule plus end conferring a structural polarity. Microtubules usually have 13 protofilaments but different protofilament numbers can be found in some organisms and specialized cells. Interacts with TFCA. Requires Mg(2+) as cofactor.

The protein localises to the cytoplasm. Its subcellular location is the cytoskeleton. Tubulin is the major constituent of microtubules, a cylinder consisting of laterally associated linear protofilaments composed of alpha- and beta-tubulin heterodimers. Microtubules grow by the addition of GTP-tubulin dimers to the microtubule end, where a stabilizing cap forms. Below the cap, tubulin dimers are in GDP-bound state, owing to GTPase activity of alpha-tubulin. The polypeptide is Tubulin beta-9 chain (TUBB9) (Arabidopsis thaliana (Mouse-ear cress)).